The primary structure comprises 414 residues: UDP-N-acetylmuramoylalanine--D-glutamate ligase (414 aa).

104-110 (GSNGKST) contacts ATP.

This sequence belongs to the MurCDEF family.

It localises to the cytoplasm. It carries out the reaction UDP-N-acetyl-alpha-D-muramoyl-L-alanine + D-glutamate + ATP = UDP-N-acetyl-alpha-D-muramoyl-L-alanyl-D-glutamate + ADP + phosphate + H(+). It functions in the pathway cell wall biogenesis; peptidoglycan biosynthesis. Functionally, cell wall formation. Catalyzes the addition of glutamate to the nucleotide precursor UDP-N-acetylmuramoyl-L-alanine (UMA). The protein is UDP-N-acetylmuramoylalanine--D-glutamate ligase of Francisella philomiragia subsp. philomiragia (strain ATCC 25017 / CCUG 19701 / FSC 153 / O#319-036).